Consider the following 314-residue polypeptide: Pseudouridine-5'-phosphate glycosidase (314 aa).

Residue Glu30 is the Proton donor of the active site. 2 residues coordinate substrate: Lys91 and Val111. Asp143 provides a ligand contact to Mn(2+). A substrate-binding site is contributed by 145–147 (SAD). Lys164 acts as the Nucleophile in catalysis.

The protein belongs to the pseudouridine-5'-phosphate glycosidase family. Homotrimer. Mn(2+) serves as cofactor.

The enzyme catalyses D-ribose 5-phosphate + uracil = psi-UMP + H2O. Functionally, catalyzes the reversible cleavage of pseudouridine 5'-phosphate (PsiMP) to ribose 5-phosphate and uracil. Functions biologically in the cleavage direction, as part of a pseudouridine degradation pathway. The sequence is that of Pseudouridine-5'-phosphate glycosidase from Cupriavidus pinatubonensis (strain JMP 134 / LMG 1197) (Cupriavidus necator (strain JMP 134)).